The chain runs to 166 residues: Large ribosomal subunit protein uL10 (166 aa).

The protein belongs to the universal ribosomal protein uL10 family. Part of the ribosomal stalk of the 50S ribosomal subunit. The N-terminus interacts with L11 and the large rRNA to form the base of the stalk. The C-terminus forms an elongated spine to which L12 dimers bind in a sequential fashion forming a multimeric L10(L12)X complex.

In terms of biological role, forms part of the ribosomal stalk, playing a central role in the interaction of the ribosome with GTP-bound translation factors. In Staphylococcus haemolyticus (strain JCSC1435), this protein is Large ribosomal subunit protein uL10.